The following is a 257-amino-acid chain: Imidazole glycerol phosphate synthase subunit HisF (257 aa).

Catalysis depends on residues D12 and D131.

It belongs to the HisA/HisF family. As to quaternary structure, heterodimer of HisH and HisF.

Its subcellular location is the cytoplasm. The enzyme catalyses 5-[(5-phospho-1-deoxy-D-ribulos-1-ylimino)methylamino]-1-(5-phospho-beta-D-ribosyl)imidazole-4-carboxamide + L-glutamine = D-erythro-1-(imidazol-4-yl)glycerol 3-phosphate + 5-amino-1-(5-phospho-beta-D-ribosyl)imidazole-4-carboxamide + L-glutamate + H(+). The protein operates within amino-acid biosynthesis; L-histidine biosynthesis; L-histidine from 5-phospho-alpha-D-ribose 1-diphosphate: step 5/9. IGPS catalyzes the conversion of PRFAR and glutamine to IGP, AICAR and glutamate. The HisF subunit catalyzes the cyclization activity that produces IGP and AICAR from PRFAR using the ammonia provided by the HisH subunit. This is Imidazole glycerol phosphate synthase subunit HisF from Teredinibacter turnerae (strain ATCC 39867 / T7901).